The following is a 202-amino-acid chain: NADH-quinone oxidoreductase subunit C (202 aa).

This sequence belongs to the complex I 30 kDa subunit family. NDH-1 is composed of 14 different subunits. Subunits NuoB, C, D, E, F, and G constitute the peripheral sector of the complex.

It localises to the cell inner membrane. The catalysed reaction is a quinone + NADH + 5 H(+)(in) = a quinol + NAD(+) + 4 H(+)(out). NDH-1 shuttles electrons from NADH, via FMN and iron-sulfur (Fe-S) centers, to quinones in the respiratory chain. The immediate electron acceptor for the enzyme in this species is believed to be ubiquinone. Couples the redox reaction to proton translocation (for every two electrons transferred, four hydrogen ions are translocated across the cytoplasmic membrane), and thus conserves the redox energy in a proton gradient. This Acidovorax sp. (strain JS42) protein is NADH-quinone oxidoreductase subunit C.